Consider the following 928-residue polypeptide: cGMP-dependent 3',5'-cyclic phosphodiesterase (928 aa).

Residue S109 is modified to Phosphoserine. The tract at residues 188 to 210 (RRPEAVQNTSADPSEDQKDEKGY) is disordered. GAF domains are found at residues 228–365 (DATS…GTVL) and 397–536 (DVSV…GISI). Residues S419, D434, I453, Y476, and T487 each contribute to the 3',5'-cyclic GMP site. Residues 566 to 890 (SDDEYTKLLH…EHWTKVSHKF (325 aa)) enclose the PDEase domain. H644 acts as the Proton donor in catalysis. Positions 648, 684, 685, and 796 each coordinate Zn(2+). D685 serves as a coordination point for Mg(2+).

This sequence belongs to the cyclic nucleotide phosphodiesterase family. PDE2 subfamily. In terms of assembly, homodimer. The cofactor is Zn(2+). Requires Mg(2+) as cofactor. Expressed in brain and liver.

It is found in the cell membrane. The protein localises to the cytoplasm. Its subcellular location is the mitochondrion matrix. The protein resides in the mitochondrion inner membrane. It localises to the mitochondrion outer membrane. The catalysed reaction is a nucleoside 3',5'-cyclic phosphate + H2O = a nucleoside 5'-phosphate + H(+). The enzyme catalyses 3',5'-cyclic GMP + H2O = GMP + H(+). It carries out the reaction 3',5'-cyclic AMP + H2O = AMP + H(+). With respect to regulation, the 3',5'-cyclic-AMP phosphodiesterase activity is stimulated by 3',5'-cyclic GMP. Specifically inhibited by Bay 60-7550. When repressed, protected from ionomycin- but not staurosporin-induced cell death. In terms of biological role, cGMP-activated cyclic nucleotide phosphodiesterase with a dual-specificity for the second messengers cAMP and cGMP, which are key regulators of many important physiological processes. Has a higher efficiency with cGMP compared to cAMP. Plays a role in cell growth and migration. Functionally, regulates mitochondrial cAMP levels and respiration. Involved in the regulation of mitochondria morphology/dynamics and apoptotic cell death via local modulation of cAMP/PKA signaling in the mitochondrion, including the monitoring of local cAMP levels at the outer mitochondrial membrane and of PKA-dependent phosphorylation of Dnm1l. This Rattus norvegicus (Rat) protein is cGMP-dependent 3',5'-cyclic phosphodiesterase.